The sequence spans 441 residues: Polycomb protein EED (441 aa).

Residues 1–72 (MSEREVSTAP…PGRKSWGKGK (72 aa)) are disordered. At Ser2 the chain carries N-acetylserine. A phosphoserine mark is found at Ser2 and Ser34. Residues 45–61 (ESGTNTERPDTPTNTPN) are compositionally biased toward polar residues. The residue at position 55 (Thr55) is a Phosphothreonine. Lys66 bears the N6,N6,N6-trimethyllysine; alternate mark. Lys66 carries the post-translational modification N6,N6-dimethyllysine; alternate. Lys66 carries the post-translational modification N6-methyllysine; alternate. An interaction with EZH2 region spans residues 81-441 (SFKCVNSLKE…ASIWRWDRLR (361 aa)). WD repeat units follow at residues 91–134 (DHNQ…EIRL), 142–185 (DADE…CIKH), 188–228 (GHGN…LVAI), and 234–275 (GHRD…NAIK). Required for interaction with the matrix protein MA of HIV-1 stretches follow at residues 149 to 303 (TCAW…STRD) and 301 to 441 (TRDI…DRLR). N6,N6,N6-trimethyllysine; alternate is present on residues Lys197, Lys268, and Lys284. 3 positions are modified to N6,N6-dimethyllysine; alternate: Lys197, Lys268, and Lys284. Lys197, Lys268, and Lys284 each carry N6-methyllysine; alternate. 3 WD repeats span residues 304 to 341 (IHRN…DDID), 359 to 399 (SQCD…PHKA), and 408 to 441 (KCGA…DRLR).

This sequence belongs to the WD repeat ESC family. As to quaternary structure, component of the PRC2/EED-EZH2 complex, which includes EED, EZH2, SUZ12, RBBP4 and RBBP7 and possibly AEBP2. The minimum components required for methyltransferase activity of the PRC2/EED-EZH2 complex are EED, EZH2 and SUZ12. Component of the PRC2/EED-EZH1 complex, which includes EED, EZH1, SUZ12, RBBP4 and AEBP2. The PRC2 complex may also interact with DNMT1, DNMT3A, DNMT3B and PHF1 via the EZH2 subunit and with SIRT1 via the SUZ12 subunit. Interacts with HDAC, HDAC2, histone H1 and YY1. May interact with ITGA4, ITGAE and ITGB7. Interacts with CDYL. Interacts with BMAL1. Interacts with KMT2A/MLL1. In terms of assembly, (Microbial infection) May interact with the MA protein of HIV-1. In terms of processing, methylated. Binding to histone H1 'Lys-26' promotes mono-, di-, and trimethylation of internal lysines. Expressed in brain, colon, heart, kidney, liver, lung, muscle, ovary, peripheral blood leukocytes, pancreas, placenta, prostate, spleen, small intestine, testis, thymus and uterus. Appears to be overexpressed in breast and colon cancer.

Its subcellular location is the nucleus. The protein resides in the chromosome. Its function is as follows. Polycomb group (PcG) protein. Component of the PRC2/EED-EZH2 complex, which methylates 'Lys-9' and 'Lys-27' of histone H3, leading to transcriptional repression of the affected target gene. Also recognizes 'Lys-26' trimethylated histone H1 with the effect of inhibiting PRC2 complex methyltransferase activity on nucleosomal histone H3 'Lys-27', whereas H3 'Lys-27' recognition has the opposite effect, enabling the propagation of this repressive mark. The PRC2/EED-EZH2 complex may also serve as a recruiting platform for DNA methyltransferases, thereby linking two epigenetic repression systems. Genes repressed by the PRC2/EED-EZH2 complex include HOXC8, HOXA9, MYT1 and CDKN2A. This Homo sapiens (Human) protein is Polycomb protein EED.